We begin with the raw amino-acid sequence, 321 residues long: Bifunctional ligase/repressor BirA (321 aa).

Positions Gly22–Gln41 form a DNA-binding region, H-T-H motif. One can recognise a BPL/LPL catalytic domain in the interval Leu67–Glu254. Residues Ser89–Asn91, Gln112, Arg116–Arg118, and Lys183 each bind biotin.

This sequence belongs to the biotin--protein ligase family. In terms of assembly, monomer in solution. Interacts with BCCP. Homodimerizes to bind DNA. Interaction with the corepressor bio-5'-AMP increases dimerization.

The enzyme catalyses biotin + L-lysyl-[protein] + ATP = N(6)-biotinyl-L-lysyl-[protein] + AMP + diphosphate + H(+). Its activity is regulated as follows. The switch between the enzymatic activity and the repressor activity is regulated by cellular demand for biotin. The switch occurs by swapping of protein interaction partners by holoBirA. In conditions of high biotin demand, holoBirA associates with apoBCCP to transfer biotin. In conditions of low biotin demand, holoBirA dimerizes, binds DNA and represses transcription of the biotin operon. Acts both as a biotin--[acetyl-CoA-carboxylase] ligase and a biotin-operon repressor. In the presence of ATP, BirA activates biotin to form the BirA-biotinyl-5'-adenylate (BirA-bio-5'-AMP or holoBirA) complex. HoloBirA can either transfer the biotinyl moiety to the biotin carboxyl carrier protein (BCCP) subunit of acetyl-CoA carboxylase, or bind to the biotin operator site and inhibit transcription of the operon. The polypeptide is Bifunctional ligase/repressor BirA (Escherichia coli (strain K12)).